The chain runs to 31 residues: Cytochrome b6-f complex subunit 6 (31 aa).

Residues Ile-4–Ser-26 form a helical membrane-spanning segment.

Belongs to the PetL family. The 4 large subunits of the cytochrome b6-f complex are cytochrome b6, subunit IV (17 kDa polypeptide, PetD), cytochrome f and the Rieske protein, while the 4 small subunits are PetG, PetL, PetM and PetN. The complex functions as a dimer.

It localises to the plastid. The protein resides in the chloroplast thylakoid membrane. In terms of biological role, component of the cytochrome b6-f complex, which mediates electron transfer between photosystem II (PSII) and photosystem I (PSI), cyclic electron flow around PSI, and state transitions. PetL is important for photoautotrophic growth as well as for electron transfer efficiency and stability of the cytochrome b6-f complex. The chain is Cytochrome b6-f complex subunit 6 from Lactuca sativa (Garden lettuce).